The sequence spans 414 residues: COUP transcription factor 2 (414 aa).

Positions Met-1 to Gln-72 are disordered. Over residues Pro-27–Pro-37 the composition is skewed to pro residues. Low complexity predominate over residues His-38–Ala-57. Thr-51 bears the Phosphothreonine mark. Residues Gly-58–Gly-67 show a composition bias toward gly residues. The segment at residues His-76 to Arg-151 is a DNA-binding region (nuclear receptor). NR C4-type zinc fingers lie at residues Cys-79 to Cys-99 and Cys-115 to Cys-139. Residues Ala-117–Gln-414 are interaction with ZFPM2. In terms of domain architecture, NR LBD spans Tyr-177–Gly-403. The interval Leu-337–Gln-414 is important for dimerization.

Belongs to the nuclear hormone receptor family. NR2 subfamily. As to quaternary structure, interacts with SQSTM1. Binds DNA as a dimer; homodimer or heterodimer with NR2F6. Interacts with NCOA1, NCOA2, NCOA3 and PPARGC1A. Interacts with ZFPM2. In terms of tissue distribution, ubiquitous. Expressed in the stromal cells of developing fetal ovaries.

It is found in the nucleus. In terms of biological role, ligand-activated transcription factor. Activated by high concentrations of 9-cis-retinoic acid and all-trans-retinoic acid, but not by dexamethasone, cortisol or progesterone (in vitro). Regulation of the apolipoprotein A-I gene transcription. Binds to DNA site A. May be required to establish ovary identity during early gonad development. The protein is COUP transcription factor 2 (NR2F2) of Homo sapiens (Human).